Reading from the N-terminus, the 367-residue chain is Probable L-aspartate decarboxylase (367 aa).

An N6-(pyridoxal phosphate)lysine modification is found at K216.

It belongs to the group II decarboxylase family. MfnA subfamily. The cofactor is pyridoxal 5'-phosphate.

It catalyses the reaction L-aspartate + H(+) = beta-alanine + CO2. Its pathway is cofactor biosynthesis; coenzyme A biosynthesis. In terms of biological role, catalyzes the decarboxylation of L-aspartate to produce beta-alanine. This chain is Probable L-aspartate decarboxylase, found in Archaeoglobus fulgidus (strain ATCC 49558 / DSM 4304 / JCM 9628 / NBRC 100126 / VC-16).